A 413-amino-acid polypeptide reads, in one-letter code: Adenylosuccinate synthetase (413 aa).

Residues 11–17 and 39–41 each bind GTP; these read GDEGKGK and GHT. D12 serves as the catalytic Proton acceptor. The Mg(2+) site is built by D12 and G39. IMP is bound by residues 12–15, 37–40, T125, R139, Q217, T232, and R296; these read DEGK and NAGH. H40 serves as the catalytic Proton donor. 292 to 298 provides a ligand contact to substrate; it reads TTTGRPR. GTP is bound by residues R298, 324–326, and 402–404; these read KLD and STG.

The protein belongs to the adenylosuccinate synthetase family. Homodimer. It depends on Mg(2+) as a cofactor.

The protein localises to the cytoplasm. It catalyses the reaction IMP + L-aspartate + GTP = N(6)-(1,2-dicarboxyethyl)-AMP + GDP + phosphate + 2 H(+). Its pathway is purine metabolism; AMP biosynthesis via de novo pathway; AMP from IMP: step 1/2. In terms of biological role, plays an important role in the de novo pathway of purine nucleotide biosynthesis. Catalyzes the first committed step in the biosynthesis of AMP from IMP. The sequence is that of Adenylosuccinate synthetase from Nautilia profundicola (strain ATCC BAA-1463 / DSM 18972 / AmH).